A 1241-amino-acid polypeptide reads, in one-letter code: eIF-2-alpha kinase GCN2 (1241 aa).

Residues 1 to 15 (MGRSSSKKKKKRGGS) are compositionally biased toward basic residues. A disordered region spans residues 1–33 (MGRSSSKKKKKRGGSGRRGQLKDHGSNADEDNE). In terms of domain architecture, RWD spans 37–148 (EEITALSAIF…EAAQEFLSEI (112 aa)). Positions 253–321 (PIAKLNTVQE…SLGSWSSDSL (69 aa)) are disordered. Composition is skewed to low complexity over residues 267-276 (DTSISSFDSS) and 307-321 (NSES…SDSL). A Protein kinase domain is found at 425 to 731 (FEELKPLGQG…ATELLKHAFP (307 aa)). Residues 431–439 (LGQGGFGHV) and Lys454 each bind ATP. Asp586 acts as the Proton acceptor in catalysis. Residues 819 to 1219 (IPMRLLSDCP…ELKKEKVVGR (401 aa)) are histidyl-tRNA synthetase-like.

This sequence belongs to the protein kinase superfamily. Ser/Thr protein kinase family. GCN2 subfamily. Homodimer; homodimerization is important for kinase activation by uncharged tRNAs. In terms of tissue distribution, expressed in roots, leaves, stems, buds, flowers, siliques and seedlings.

The protein resides in the cytoplasm. It carries out the reaction L-seryl-[protein] + ATP = O-phospho-L-seryl-[protein] + ADP + H(+). The catalysed reaction is L-threonyl-[protein] + ATP = O-phospho-L-threonyl-[protein] + ADP + H(+). Its activity is regulated as follows. The kinase activity is stimulated upon binding to uncharged tRNAs. Its function is as follows. Metabolic-stress sensing protein kinase that phosphorylates the alpha subunit of eukaryotic translation initiation factor 2 eIF-2-alpha in response to low amino acid availability. Plays a role as an activator of the general amino acid control pathway required for adapatation to amino acid starvation. Converts phosphorylated eIF-2-alpha either to a competitive inhibitor of translation initiation, leading to a global protein synthesis repression, and thus to a reduced overall utilization of amino acids, or to a translational initiation activation of specific mRNAs, and hence allowing reprogramming of amino acid biosynthetic gene expression to alleviate nutrient depletion. Binds uncharged tRNAs. The chain is eIF-2-alpha kinase GCN2 from Arabidopsis thaliana (Mouse-ear cress).